Here is a 257-residue protein sequence, read N- to C-terminus: Protein UL24 homolog (257 aa).

The disordered stretch occupies residues lysine 193–proline 257.

This sequence belongs to the herpesviridae UL24 family.

The protein resides in the virion. It is found in the host cytoplasm. The protein localises to the host nucleus. It localises to the host nucleolus. Its subcellular location is the host Golgi apparatus. Functionally, may participate in nuclear egress of viral particles. Plays a role in the dispersal of several host nucleolar proteins including NCL/nucleolin and NPM1. Since deletion of host NCL/nucleolin negatively impact on nuclear egress, UL24 supposedly acts on this process through its effect on host nucleoli. Induces cell cycle arrest in host cells at the G2/M phase following by apoptosis. The mechanism involves the inhibition of host mitotic complex cyclin-B/CDK1. The protein is Protein UL24 homolog (ORF20) of Homo sapiens (Human).